A 641-amino-acid chain; its full sequence is Phosphomethylpyrimidine synthase (641 aa).

Substrate-binding positions include N221, M250, Y279, H315, 335–337 (SRG), 376–379 (DGLR), and E415. Residue H419 coordinates Zn(2+). A substrate-binding site is contributed by Y442. Residue H483 participates in Zn(2+) binding. 3 residues coordinate [4Fe-4S] cluster: C563, C566, and C571.

The protein belongs to the ThiC family. Homodimer. [4Fe-4S] cluster serves as cofactor.

It catalyses the reaction 5-amino-1-(5-phospho-beta-D-ribosyl)imidazole + S-adenosyl-L-methionine = 4-amino-2-methyl-5-(phosphooxymethyl)pyrimidine + CO + 5'-deoxyadenosine + formate + L-methionine + 3 H(+). It participates in cofactor biosynthesis; thiamine diphosphate biosynthesis. Its function is as follows. Catalyzes the synthesis of the hydroxymethylpyrimidine phosphate (HMP-P) moiety of thiamine from aminoimidazole ribotide (AIR) in a radical S-adenosyl-L-methionine (SAM)-dependent reaction. This Rhodopseudomonas palustris (strain BisA53) protein is Phosphomethylpyrimidine synthase.